We begin with the raw amino-acid sequence, 149 residues long: NPC intracellular cholesterol transporter 2 (149 aa).

Positions 1 to 19 (MHFLAAAFLLLTLSASALA) are cleaved as a signal peptide. 3 disulfide bridges follow: C27/C140, C42/C47, and C93/C99. N-linked (GlcNAc...) asparagine glycosylation occurs at N58. Position 116 is an N6-acetyllysine (K116).

Belongs to the NPC2 family. Interacts with NPC1 (via the second lumenal domain) in a cholestrol-dependent manner. Interacts with NUS1/NgBR, the interaction stabilizes NCP2 and regulates cholesterol trafficking. Interacts with DHDDS. Interacts with NEDD4L (via C2 domain). Interacts with NPC1L1. N-glycosylated. Found in the epididymal fluid as a 19 kDa glycoprotein that is processed during its passage through the epididymis into a 16 kDa protein. In terms of tissue distribution, found in the fluid from the distal caput to cauda epididymis, not detected in the rete testis and the proximal and middle caput epididymal fluids (at protein level).

It is found in the secreted. It localises to the endoplasmic reticulum. The protein localises to the lysosome. It catalyses the reaction cholesterol(in) = cholesterol(out). Intracellular cholesterol transporter which acts in concert with NPC1 and plays an important role in the egress of cholesterol from the lysosomal compartment. Unesterified cholesterol that has been released from LDLs in the lumen of the late endosomes/lysosomes is transferred by NPC2 to the cholesterol-binding pocket in the N-terminal domain of NPC1. May bind and mobilize cholesterol that is associated with membranes. NPC2 binds cholesterol with a 1:1 stoichiometry. Can bind a variety of sterols, including lathosterol, desmosterol and the plant sterols stigmasterol and beta-sitosterol. The secreted form of NCP2 regulates biliary cholesterol secretion via stimulation of ABCG5/ABCG8-mediated cholesterol transport. This is NPC intracellular cholesterol transporter 2 from Sus scrofa (Pig).